The sequence spans 67 residues: Probable Sec-independent protein translocase protein TatE (67 aa).

Residues 4-21 (ISITKLLVVAALVVLLFG) form a helical membrane-spanning segment.

It belongs to the TatA/E family. TatE subfamily.

It is found in the cell inner membrane. Functionally, part of the twin-arginine translocation (Tat) system that transports large folded proteins containing a characteristic twin-arginine motif in their signal peptide across membranes. TatE shares overlapping functions with TatA. The protein is Probable Sec-independent protein translocase protein TatE of Enterobacter cloacae subsp. cloacae (strain ATCC 13047 / DSM 30054 / NBRC 13535 / NCTC 10005 / WDCM 00083 / NCDC 279-56).